A 141-amino-acid chain; its full sequence is Large ribosomal subunit protein uL13 (141 aa).

It belongs to the universal ribosomal protein uL13 family. As to quaternary structure, part of the 50S ribosomal subunit.

This protein is one of the early assembly proteins of the 50S ribosomal subunit, although it is not seen to bind rRNA by itself. It is important during the early stages of 50S assembly. This is Large ribosomal subunit protein uL13 from Sulfurovum sp. (strain NBC37-1).